Consider the following 200-residue polypeptide: Inducible T-cell costimulator (200 aa).

Residues 1–20 (MKPYFSCVFVFCFLIKLLTG) form the signal peptide. Over 21-145 (ELNDLANHRM…LCCQLKLWLP (125 aa)) the chain is Extracellular. Positions 30–133 (MFSFHDGGVQ…LSGGYLLIYE (104 aa)) constitute an Ig-like V-type domain. 2 disulfides stabilise this stretch: C42/C109 and C63/C83. N-linked (GlcNAc...) asparagine glycosylation is found at N89 and N123. A helical membrane pass occupies residues 146–166 (VGCAAFVAALLFGCIFIVWFA). The Cytoplasmic portion of the chain corresponds to 167 to 200 (KKKYRSSVHDPNSEYMFMAAVNTNKKSRLAGMTS).

As to quaternary structure, homodimer; disulfide-linked. Interacts with ICOSLG. Interacts with PIK3R1. Interacts with TBK1; this interaction is critical for the maturation of T follicular regulatory cells. N-glycosylated. In terms of tissue distribution, strongly expressed in the spleen and lung. Lower expression seen in liver, kidney and testis.

The protein localises to the cell membrane. Its function is as follows. Stimulatory receptor expressed in activated or antigen-experienced T-cells that plays an important role in the immune response. Upon binding to its ligand ICOSL expressed on antigen presenting cells (APCs), delivers costimulatory signals that enhances all basic T-cell responses to a foreign antigen, namely proliferation, secretion of lymphokines including IL10, up-regulation of molecules that mediate cell-cell interaction, and effective help for antibody secretion by B-cells. Also acts as a costimulatory receptor critical for the differentiation of T follicular regulatory cells upon immune challenges such as viral infection. Mechanistically, potentiates TCR-induced calcium flux by augmenting PLCG1 activation and actin remodeling. In addition, activates PI3K signaling pathways independently of calcium flux. Essential both for efficient interaction between T and B-cells and for normal antibody responses to T-cell dependent antigens. Prevents the apoptosis of pre-activated T-cells. Plays a critical role in CD40-mediated class switching of immunoglobin isotypes. This chain is Inducible T-cell costimulator (Icos), found in Rattus norvegicus (Rat).